Consider the following 80-residue polypeptide: 14-3-3-like protein 1 (80 aa).

This sequence belongs to the 14-3-3 family.

The chain is 14-3-3-like protein 1 from Pseudotsuga menziesii (Douglas-fir).